We begin with the raw amino-acid sequence, 327 residues long: Lipoyl synthase (327 aa).

The [4Fe-4S] cluster site is built by Cys66, Cys71, Cys77, Cys92, Cys96, Cys99, and Ser306. A Radical SAM core domain is found at 78-295 (FSKGTATFMI…EKEAYELGFS (218 aa)).

Belongs to the radical SAM superfamily. Lipoyl synthase family. Requires [4Fe-4S] cluster as cofactor.

It is found in the cytoplasm. The catalysed reaction is [[Fe-S] cluster scaffold protein carrying a second [4Fe-4S](2+) cluster] + N(6)-octanoyl-L-lysyl-[protein] + 2 oxidized [2Fe-2S]-[ferredoxin] + 2 S-adenosyl-L-methionine + 4 H(+) = [[Fe-S] cluster scaffold protein] + N(6)-[(R)-dihydrolipoyl]-L-lysyl-[protein] + 4 Fe(3+) + 2 hydrogen sulfide + 2 5'-deoxyadenosine + 2 L-methionine + 2 reduced [2Fe-2S]-[ferredoxin]. It participates in protein modification; protein lipoylation via endogenous pathway; protein N(6)-(lipoyl)lysine from octanoyl-[acyl-carrier-protein]: step 2/2. Functionally, catalyzes the radical-mediated insertion of two sulfur atoms into the C-6 and C-8 positions of the octanoyl moiety bound to the lipoyl domains of lipoate-dependent enzymes, thereby converting the octanoylated domains into lipoylated derivatives. The chain is Lipoyl synthase from Neisseria meningitidis serogroup A / serotype 4A (strain DSM 15465 / Z2491).